Reading from the N-terminus, the 178-residue chain is MRCPFCGHEDTQVKDSRPHEDGAAIRRRRICAACSQRFTTIERVQLRDLYVVKADDRRVPFERDKLARSVRIALRKRPVDEERIERIVNGLVRQLEASGETDIPSRDIGKLVMGTLREVDIVAYIRFASVHWDFRETKDFAAILQSIPGTADGDVPVVPGDAAAAIAAESGPGGVKRR.

The segment at 1 to 21 (MRCPFCGHEDTQVKDSRPHED) is disordered. A zinc finger lies at 3 to 34 (CPFCGHEDTQVKDSRPHEDGAAIRRRRICAAC). The segment covering 7 to 21 (GHEDTQVKDSRPHED) has biased composition (basic and acidic residues). The 91-residue stretch at 49 to 139 (LYVVKADDRR…VHWDFRETKD (91 aa)) folds into the ATP-cone domain.

Belongs to the NrdR family. It depends on Zn(2+) as a cofactor.

Negatively regulates transcription of bacterial ribonucleotide reductase nrd genes and operons by binding to NrdR-boxes. In Gluconacetobacter diazotrophicus (strain ATCC 49037 / DSM 5601 / CCUG 37298 / CIP 103539 / LMG 7603 / PAl5), this protein is Transcriptional repressor NrdR.